We begin with the raw amino-acid sequence, 218 residues long: Cytochrome b6 (218 aa).

A helical membrane pass occupies residues 35–55; the sequence is IFYCLGGITLVCFLIQFATGF. Cysteine 38 is a heme c binding site. Histidine 89 and histidine 103 together coordinate heme b. 3 helical membrane passes run 93–113, 119–139, and 189–209; these read ASMM…TGGF, LTWV…VTGY, and LHTF…FLMI. Histidine 190 and histidine 205 together coordinate heme b.

It belongs to the cytochrome b family. PetB subfamily. The 4 large subunits of the cytochrome b6-f complex are cytochrome b6, subunit IV (17 kDa polypeptide, PetD), cytochrome f and the Rieske protein, while the 4 small subunits are PetG, PetL, PetM and PetN. The complex functions as a dimer. The cofactor is heme b. Heme c is required as a cofactor.

The protein localises to the cellular thylakoid membrane. Its function is as follows. Component of the cytochrome b6-f complex, which mediates electron transfer between photosystem II (PSII) and photosystem I (PSI), cyclic electron flow around PSI, and state transitions. The polypeptide is Cytochrome b6 (Synechococcus sp. (strain RCC307)).